The chain runs to 469 residues: Abscisic acid 8'-hydroxylase CYP707A2 (469 aa).

A helical transmembrane segment spans residues 3–23 (FVSMLCLFTFISLTLLLIHSI). Cys-414 is a binding site for heme.

It belongs to the cytochrome P450 family. It depends on heme as a cofactor. In terms of tissue distribution, expressed at low levels in fruit.

The protein resides in the membrane. It catalyses the reaction 2-cis-(+)-abscisate + reduced [NADPH--hemoprotein reductase] + O2 = (+)-8'-hydroxyabscisate + oxidized [NADPH--hemoprotein reductase] + H2O + H(+). The protein operates within plant hormone degradation; abscisic acid degradation. Its function is as follows. Negative regulator of fruit ripening involved in the oxidative degradation of abscisic acid (ABA). This is Abscisic acid 8'-hydroxylase CYP707A2 from Solanum lycopersicum (Tomato).